The following is a 475-amino-acid chain: BICD family-like cargo adapter 2 (475 aa).

A coiled-coil region spans residues 56-275 (ELGKALLERN…LKELQDELHM (220 aa)). Polar residues-rich tracts occupy residues 286 to 300 (HSSL…TAVQ) and 308 to 318 (SAETQSITSGY). Residues 286-318 (HSSLHSEIQQSTAVQNHEKGRNSAETQSITSGY) form a disordered region. Residues 340–413 (RLQDQVTMQH…ESLNLQLLST (74 aa)) adopt a coiled-coil conformation. Positions 440–450 (QSQKQQETQKP) are enriched in low complexity. Positions 440–459 (QSQKQQETQKPPESPQNSFL) are disordered.

This sequence belongs to the BICDR family.

In Xenopus tropicalis (Western clawed frog), this protein is BICD family-like cargo adapter 2 (bicdl2).